Consider the following 1846-residue polypeptide: Peripheral-type benzodiazepine receptor-associated protein 1 (1846 aa).

3 disordered regions span residues 57–97, 281–318, and 560–628; these read EESS…GYSC, NQRE…DDVE, and GPKD…SEVE. The segment covering 576–587 has biased composition (polar residues); it reads PKSSEPALTTLT. Low complexity predominate over residues 599–612; the sequence is SLSNSSRSESIHNS. Residues 649–716 form the SH3 1 domain; that stretch reads ARIQVFLARY…PSNFVERVSD (68 aa). The segment at 726-785 is disordered; it reads ELADSSHSSGPELSFLSGGGGGCSSGGQSSGGRSQPRPEEEAAGDELSLSPPPEGLGEPL. Residues 742–755 show a composition bias toward gly residues; the sequence is SGGGGGCSSGGQSS. 3 Fibronectin type-III domains span residues 787 to 878, 880 to 972, and 977 to 1075; these read VPYP…AGAG, VPSQ…TLPA, and APLD…PALA. 7 disordered regions span residues 1084–1107, 1163–1219, 1243–1302, 1322–1476, 1492–1617, 1704–1755, and 1812–1846; these read SCLS…GLGD, EPTL…LDSG, HSRN…SDEE, SIPE…PESS, YDSE…QDLP, LTEA…AAQK, and VPSN…RVQC. The segment covering 1202–1219 has biased composition (basic and acidic residues); the sequence is TQKKPSIEACHGGDLDSG. A compositionally biased stretch (acidic residues) spans 1251 to 1265; sequence DIQEEEEEEEEEEEE. Positions 1270 to 1283 are enriched in polar residues; sequence PCSSQKQVAGNSIR. The span at 1324-1335 shows a compositional bias: acidic residues; it reads PEEEEEEEEEEG. 2 stretches are compositionally biased toward basic and acidic residues: residues 1411–1420 and 1545–1577; these read RPQDPREHCS and AWEK…ESRG. Residues 1616–1684 enclose the SH3 2 domain; the sequence is LPVRVFVALF…PCNMVAEVAV (69 aa). Residues 1705-1719 are compositionally biased toward polar residues; the sequence is TEASGNGPSVYSSAH. The region spanning 1755–1822 is the SH3 3 domain; sequence KTSRPMVAAF…PSNFLEGPGP (68 aa). A compositionally biased stretch (low complexity) spans 1817 to 1830; that stretch reads LEGPGPESGSLESG.

It belongs to the RIMBP family. Interacts with RIMS1 and RIMS2. Interacts with TSPO. Interacts with CACNA1A. Predominantly expressed in the brain.

It is found in the cytoplasm. It localises to the mitochondrion. Its function is as follows. Required for synaptic transmission regulation. It probably controls the recruitement of voltage-gated calcium channels to the presynaptic membrane, and modulates neurotransmitter release. The sequence is that of Peripheral-type benzodiazepine receptor-associated protein 1 from Mus musculus (Mouse).